A 542-amino-acid polypeptide reads, in one-letter code: Organic anion transporter 3 (542 aa).

Topologically, residues 1-9 (MTFSEILDR) are cytoplasmic. S4 carries the phosphoserine modification. A helical membrane pass occupies residues 10–30 (VGSMGPFQFLHVALLGFPILG). Topologically, residues 31 to 123 (MANHNLLQIF…LVCSSNKLKE (93 aa)) are extracellular. N86 carries N-linked (GlcNAc...) asparagine glycosylation. Residues 124–144 (MAQSIFMAGILIGGLVLGDLS) traverse the membrane as a helical segment. The Cytoplasmic segment spans residues 145-150 (DRFGRK). The helical transmembrane segment at 151-171 (PILTCCYLLLAASGSSTAFSP) threads the bilayer. At 172–176 (TLPIY) the chain is on the extracellular side. Residues 177 to 197 (MVFRFLCGFSISGISLSTVIL) traverse the membrane as a helical segment. Topologically, residues 198-212 (NVEWVPTKMRAITST) are cytoplasmic. Residues 213–233 (AIGYCYTIGQFILPGLAYAIP) form a helical membrane-spanning segment. Topologically, residues 234 to 236 (QWR) are extracellular. A helical transmembrane segment spans residues 237–257 (WLQLTVSVPYFIFSLLSWWIP). At 258–327 (ESIRWLVLAG…FRTPILRRVT (70 aa)) the chain is on the cytoplasmic side. The chain crosses the membrane as a helical span at residues 328-348 (LCLSLAWFATGFAYYSLAMGV). The Extracellular segment spans residues 349–354 (EEFGVN). Residues 355 to 375 (IYILQIIFGGVDIPAKFITIL) traverse the membrane as a helical segment. Residues 376-389 (SLSYLGRHITQGAA) are Cytoplasmic-facing. The chain crosses the membrane as a helical span at residues 390-410 (LILAGAAILSLIFVPMDMSLL). R411 is a topological domain (extracellular). A helical membrane pass occupies residues 412-432 (TILAVFGKGCLSGSFSCLFLY). Over 433 to 471 (TSELFPTVIRQTGMGISNVWARVGSMISPLVKITGEIQP) the chain is Cytoplasmic. A helical membrane pass occupies residues 472–492 (FIPNIIYGTVALLGGSAALFL). At 493-542 (PETLNQPLPETLEDMENWFLQSKKLKQEPEAEKASQRIPLQPSGPGVDRS) the chain is on the extracellular side. Residues 518–527 (KQEPEAEKAS) are compositionally biased toward basic and acidic residues. The interval 518–542 (KQEPEAEKASQRIPLQPSGPGVDRS) is disordered.

Belongs to the major facilitator (TC 2.A.1) superfamily. Organic cation transporter (TC 2.A.1.19) family.

The protein localises to the basolateral cell membrane. It carries out the reaction estrone 3-sulfate(out) + glutarate(in) = estrone 3-sulfate(in) + glutarate(out). The enzyme catalyses estrone 3-sulfate(in) + 2-oxoglutarate(out) = estrone 3-sulfate(out) + 2-oxoglutarate(in). The catalysed reaction is glutarate(in) + 2-oxoglutarate(out) = glutarate(out) + 2-oxoglutarate(in). It catalyses the reaction urate(in) + 2-oxoglutarate(out) = urate(out) + 2-oxoglutarate(in). It carries out the reaction taurocholate(out) + glutarate(in) = taurocholate(in) + glutarate(out). The enzyme catalyses dehydroepiandrosterone 3-sulfate(out) + glutarate(in) = dehydroepiandrosterone 3-sulfate(in) + glutarate(out). The catalysed reaction is prostaglandin F2alpha(out) + glutarate(in) = prostaglandin F2alpha(in) + glutarate(out). It catalyses the reaction prostaglandin F2alpha(out) + 2-oxoglutarate(in) = prostaglandin F2alpha(in) + 2-oxoglutarate(out). It carries out the reaction (R)-carnitine(out) + 2-oxoglutarate(in) = (R)-carnitine(in) + 2-oxoglutarate(out). The enzyme catalyses glutarate(in) + (R)-carnitine(out) = glutarate(out) + (R)-carnitine(in). The catalysed reaction is prostaglandin E2(out) + 2-oxoglutarate(in) = prostaglandin E2(in) + 2-oxoglutarate(out). It catalyses the reaction prostaglandin E2(out) + glutarate(in) = prostaglandin E2(in) + glutarate(out). It carries out the reaction urate(in) + glutarate(out) = urate(out) + glutarate(in). The enzyme catalyses taurocholate(out) + 2-oxoglutarate(in) = taurocholate(in) + 2-oxoglutarate(out). The catalysed reaction is dehydroepiandrosterone 3-sulfate(out) + 2-oxoglutarate(in) = dehydroepiandrosterone 3-sulfate(in) + 2-oxoglutarate(out). It catalyses the reaction kynurenate(out) + a dicarboxylate(in) = kynurenate(in) + a dicarboxylate(out). It carries out the reaction (indol-3-yl)acetate(out) + a dicarboxylate(in) = (indol-3-yl)acetate(in) + a dicarboxylate(out). The enzyme catalyses indoxyl sulfate(out) + a dicarboxylate(in) = indoxyl sulfate(in) + a dicarboxylate(out). The catalysed reaction is N-benzoylglycine(out) + a dicarboxylate(in) = N-benzoylglycine(in) + a dicarboxylate(out). It catalyses the reaction 3-carboxy-4-methyl-5-propyl-2-furanpropanoate(out) + a dicarboxylate(in) = 3-carboxy-4-methyl-5-propyl-2-furanpropanoate(in) + a dicarboxylate(out). It carries out the reaction (6R)-L-erythro-5,6,7,8-tetrahydrobiopterin(out) + a dicarboxylate(in) = (6R)-L-erythro-5,6,7,8-tetrahydrobiopterin(in) + a dicarboxylate(out). The enzyme catalyses L-erythro-7,8-dihydrobiopterin(out) + a dicarboxylate(in) = L-erythro-7,8-dihydrobiopterin(in) + a dicarboxylate(out). The catalysed reaction is L-sepiapterin(out) + a dicarboxylate(in) = L-sepiapterin(in) + a dicarboxylate(out). Functionally, functions as an organic anion/dicarboxylate exchanger that couples organic anion uptake indirectly to the sodium gradient. Transports organic anions such as estrone 3-sulfate (E1S) and urate in exchange for dicarboxylates such as glutarate or ketoglutarate (2-oxoglutarate). Plays an important role in the excretion of endogenous and exogenous organic anions, especially from the kidney and the brain. E1S transport is pH- and chloride-dependent and may also involve E1S/cGMP exchange. Responsible for the transport of prostaglandin E2 (PGE2) and prostaglandin F2(alpha) (PGF2(alpha)) in the basolateral side of the renal tubule. Involved in the transport of neuroactive tryptophan metabolites kynurenate and xanthurenate. Functions as a biopterin transporters involved in the uptake and the secretion of coenzymes tetrahydrobiopterin (BH4), dihydrobiopterin (BH2) and sepiapterin to urine, thereby determining baseline levels of blood biopterins. May be involved in the basolateral transport of steviol, a metabolite of the popular sugar substitute stevioside. May participate in the detoxification/ renal excretion of drugs and xenobiotics, such as the histamine H(2)-receptor antagonists fexofenadine and cimetidine, the antibiotic benzylpenicillin (PCG), the anionic herbicide 2,4-dichloro-phenoxyacetate (2,4-D), the diagnostic agent p-aminohippurate (PAH), the antiviral acyclovir (ACV), and the mycotoxin ochratoxin (OTA), by transporting these exogenous organic anions across the cell membrane in exchange for dicarboxylates such as 2-oxoglutarate. Contributes to the renal uptake of potent uremic toxins (indoxyl sulfate (IS), indole acetate (IA), hippurate/N-benzoylglycine (HA) and 3-carboxy-4-methyl-5-propyl-2-furanpropionate (CMPF)), pravastatin, PCG, E1S and dehydroepiandrosterone sulfate (DHEAS), and is partly involved in the renal uptake of temocaprilat (an angiotensin-converting enzyme (ACE) inhibitor). May contribute to the release of cortisol in the adrenals. Involved in one of the detoxification systems on the choroid plexus (CP), removes substrates such as E1S or taurocholate (TC), PCG, 2,4-D and PAH, from the cerebrospinal fluid (CSF) to the blood for eventual excretion in urine and bile. Also contributes to the uptake of several other organic compounds such as the prostanoids prostaglandin E(2) and prostaglandin F(2-alpha), L-carnitine, and the therapeutic drugs allopurinol, 6-mercaptopurine (6-MP) and 5-fluorouracil (5-FU). Mediates the transport of PAH, PCG, and the statins pravastatin and pitavastatin, from the cerebrum into the blood circulation across the blood-brain barrier (BBB). In summary, plays a role in the efflux of drugs and xenobiotics, helping reduce their undesired toxicological effects on the body. In Oryctolagus cuniculus (Rabbit), this protein is Organic anion transporter 3 (SLC22A8).